A 292-amino-acid chain; its full sequence is 33 kDa chaperonin (292 aa).

Intrachain disulfides connect C230–C232 and C263–C266.

Belongs to the HSP33 family. Post-translationally, under oxidizing conditions two disulfide bonds are formed involving the reactive cysteines. Under reducing conditions zinc is bound to the reactive cysteines and the protein is inactive.

It is found in the cytoplasm. Redox regulated molecular chaperone. Protects both thermally unfolding and oxidatively damaged proteins from irreversible aggregation. Plays an important role in the bacterial defense system toward oxidative stress. This Salmonella choleraesuis (strain SC-B67) protein is 33 kDa chaperonin.